A 269-amino-acid chain; its full sequence is 1,6-dihydroxycyclohexa-2,4-diene-1-carboxylate dehydrogenase (269 aa).

11–35 lines the NAD(+) pocket; the sequence is VITGAAQGIGRRVAERMAAEGGRLL. Ser-142 lines the substrate pocket. The Proton acceptor role is filled by Tyr-153.

It belongs to the short-chain dehydrogenases/reductases (SDR) family. As to quaternary structure, homodimer.

The catalysed reaction is (1R,6S)-1,6-dihydroxycyclohexa-2,4-diene-1-carboxylate + NAD(+) = catechol + CO2 + NADH. It functions in the pathway aromatic compound metabolism; benzoate degradation via hydroxylation; catechol from benzoate: step 2/2. Its function is as follows. Degradation of 2-hydro-1,2-dihydroxy benzoate (DHB) to catechol. The protein is 1,6-dihydroxycyclohexa-2,4-diene-1-carboxylate dehydrogenase (xylL) of Pseudomonas putida (Arthrobacter siderocapsulatus).